The sequence spans 185 residues: MGRSAGFILWLTGLSGAGKSTLSRALRAHLASSMPVEVLDGDEVRTWLSRGLGFTREDREENVRRIGHVARLLAKHGVGVIAAAISPYASSRAEVRRLAEEAGIPFVEIYVQAPLDVLIARDVKGLYKKALAGELAHFTGVSDPYEAPDAPDVTVHSDVDTVEAGLWRVLETLRKRGLLDAAAAA.

13–20 lines the ATP pocket; the sequence is GLSGAGKS. The Phosphoserine intermediate role is filled by S86.

This sequence belongs to the APS kinase family.

The enzyme catalyses adenosine 5'-phosphosulfate + ATP = 3'-phosphoadenylyl sulfate + ADP + H(+). It participates in sulfur metabolism; hydrogen sulfide biosynthesis; sulfite from sulfate: step 2/3. In terms of biological role, catalyzes the synthesis of activated sulfate. The polypeptide is Adenylyl-sulfate kinase (Myxococcus xanthus (strain DK1622)).